A 363-amino-acid chain; its full sequence is Peptide chain release factor 1 (363 aa).

The residue at position 237 (Gln-237) is an N5-methylglutamine. Residues 284-296 (EDEKRRSAEESTR) show a composition bias toward basic and acidic residues. Positions 284 to 306 (EDEKRRSAEESTRRSLVASGDRS) are disordered.

This sequence belongs to the prokaryotic/mitochondrial release factor family. Post-translationally, methylated by PrmC. Methylation increases the termination efficiency of RF1.

It is found in the cytoplasm. Its function is as follows. Peptide chain release factor 1 directs the termination of translation in response to the peptide chain termination codons UAG and UAA. The chain is Peptide chain release factor 1 from Shewanella oneidensis (strain ATCC 700550 / JCM 31522 / CIP 106686 / LMG 19005 / NCIMB 14063 / MR-1).